A 486-amino-acid polypeptide reads, in one-letter code: MRVAMVAYEVYPFAKVGGLADVVGSLPKVIEKQGVKVTVFMPFHKIVSKNCEKLGLEIKEVARAISLPNLQTKEKFDLYKSTVPATNVSVYFISNDYYFSADNVYEGPDLAEQSIFFSNAAIEAMKYLSETFDIVHAHDWQTGLVPVYLKTLYRTDPFFNRTATVFTIHNLGYQGVFNPGYMKFAGLPAYLFNIDGLEFYGQINFLKGGILFSDIVTTVSPTYAQEIQTEQFGEKLDGVLRLRAEDLYGILNGIDYSEYNPATDKRIYVNYDIDHIEKKKMNKSELQKELNLQVRDDVPLIGMINRLVDQKGLDLIEKIVDYMMMFDIQFVVLGTGDKKYEEFFKNIEKKYPQKISSNMKFDVDLAQKIYAASDMFLMPSRYEPCGLGQMYSLRYGTVPIVRYTGGLADSVKEYDPKTRDGNGFGFREYDTAHLLETVAKAVYFYKKEKDHWGKVVKNAMKTDVSWDRSAKQYLKIYQEALRKKQF.

Position 15 (K15) interacts with ADP-alpha-D-glucose.

Belongs to the glycosyltransferase 1 family. Bacterial/plant glycogen synthase subfamily.

The catalysed reaction is [(1-&gt;4)-alpha-D-glucosyl](n) + ADP-alpha-D-glucose = [(1-&gt;4)-alpha-D-glucosyl](n+1) + ADP + H(+). Its pathway is glycan biosynthesis; glycogen biosynthesis. Its function is as follows. Synthesizes alpha-1,4-glucan chains using ADP-glucose. The polypeptide is Glycogen synthase (Pseudothermotoga lettingae (strain ATCC BAA-301 / DSM 14385 / NBRC 107922 / TMO) (Thermotoga lettingae)).